A 1375-amino-acid chain; its full sequence is MDRIAVRAKRKELGISCMLNTEVGAVLAVIRRPLSESYLSPQETDHCDSSVQQSLKSLRALIFNPQQDWRTIDPSVYLSPFLEVIQSDEIPASATAVALSSILKILKIEIFDEKTPGAKDAMNSIVSGITSCRLEKTDLVSEDAVMMRILQVLTGIMKHPSSELLEDQAVCTIVNTCFQVVQQSTGRGDLLQRNGRYTMHELIQIIFSRLPDFEVRGDEGGEDSESDTDEIDMSGGYGIRCCIDIFHFLCSLLNVVEVVENLEGTNVHTADEDVQIFALVLINSAIELSGDAIGQHPKLLRMVQDDLFHHLIHYGASSSPLVLSMICSCILNIYHFLRKFMRLQLEAFFSFVLLRVTAFTGFLPLQEVALEGLINFCRQPAFIVEAYVNYDCDPMCRNIFEETGKVLCRHTFPTSGPLTSIQIQAFEGLVILIHNIADNMDREEDEGNEEDDNNSNVIKPSPVEIHEYIPFWIDKPKEDFETWVDHIRVRKAQKRKLAIAANHFNRDEKKGLEYLKYNYLVSDPLDPMALASFFRFTPGLDKTMIGDYLGDPDELHLSVLRSFTHTFEFTGMNLDTALRTFLESFRLPGESQKIERMIEAFSERFYDQQSSDIFASKDTVHILCYSLIMLNTDQHNPQVRRKMTEDEFIRNNRAINAGNDLPKEYLSELFQSIATNAFALSTHSGPVEMNPNRWIELMNRTKTTQPFSLCQFDRRIGRDMFATIAGPSIAAVSAFFEHSDDDEVLHECVDAMISIARVAQYGLEDILDELIASFCKFTTLLNPYTTPEETLFAFSHDMKPRMATLAVFTLANTFGDSIRGGWRNIVDCLLKLRKLQLLPQSVIEFEINEENGGSESDMNNVSSQDTKFNRRQGSSLMGRFSHFLALDNVEESVALGMSEFEQNLKVIKQCRIGQIFSKSSVLPDVAVLNLGRSLIYAAAGKGQKFSTAIEEEETVKFCWDLIITIALSNVHRFNMFWPSYHEYLLNVANFPLFSPIPFVEKGLPGLFRVCIKILASNLQDHLPEELIFRSLTIMWKIDKEIIETCYDTITEFVSKIIIDYSANLHTNIGWKSVLQLLSLCGRHPETKEQAVDALIGLMSFNASHLSQSSYAYCIDCAFSFVALRNSSVEKNLKILDLMADSVTMLVKWYKTASTDTANSYSPASNTSSSSSMEENNLRGVNFVHHLFLKLSEAFRKTTLARREEIRNRAVTSLEKSFTMGHEDLGFTPSGCIYCIDHVIFPTIDDLHEKLLDYSRRENAEREMRSMEGTLKIAMKVLMNVFLVYLEQIVESAEFRTFWLGVLRRMDTCMKADLGEYGDNKLQEVVPELLTTMIGTMKEKEILVQKEDDDLWEITYIQIQWIAPALKDELFPDEEI.

The SEC7 domain maps to 486 to 676 (HIRVRKAQKR…SELFQSIATN (191 aa)). Glu590 is an active-site residue.

Homodimer. Preferentially expressed in mature pollen grains and growing pollen tubes.

The protein resides in the cytoplasm. The protein localises to the cytosol. Its subcellular location is the membrane. Functionally, activates the ARF proteins by exchanging bound GDP for free GTP. Plays a role in vesicular protein sorting. Essential for pollen germination. This chain is ARF guanine-nucleotide exchange factor GNL2 (GNL2), found in Arabidopsis thaliana (Mouse-ear cress).